The sequence spans 1036 residues: Ephrin type-A receptor 6 (1036 aa).

An N-terminal signal peptide occupies residues 1–22; the sequence is MGGCEVREFLLQFGFFLPLLTA. The Extracellular segment spans residues 23–550; the sequence is WPGDCSHVSN…MAAEQGQILV (528 aa). The region spanning 34–212 is the Eph LBD domain; it reads QVVLLDTTTV…FYKKCPFTVR (179 aa). 2 Fibronectin type-III domains span residues 331–441 and 442–537; these read PPSA…TDQD and APSL…TGDE. 3 N-linked (GlcNAc...) asparagine glycosylation sites follow: Asn343, Asn397, and Asn410. Residues 551–571 traverse the membrane as a helical segment; that stretch reads IATAAVGGFTLLVILTLFFLI. Over 572 to 1036 the chain is Cytoplasmic; that stretch reads TGRCQWYIKA…MHIQEKGFHV (465 aa). 2 positions are modified to phosphotyrosine; by autocatalysis: Tyr606 and Tyr612. A Protein kinase domain is found at 631–944; it reads IRIERVIGAG…RNPSALHTLV (314 aa). ATP-binding positions include 637–645 and Lys663; that span reads IGAGEFGEV. Asp798 acts as the Proton acceptor in catalysis. A phosphotyrosine; by autocatalysis mark is found at Tyr831 and Tyr978. The SAM domain maps to 961 to 1025; sequence PLFVTVGDWL…VSSIQTLRLH (65 aa). The short motif at 1034-1036 is the PDZ-binding element; the sequence is FHV.

It belongs to the protein kinase superfamily. Tyr protein kinase family. Ephrin receptor subfamily. As to quaternary structure, heterotetramer upon binding of the ligand. The heterotetramer is composed of an ephrin dimer and a receptor dimer. Oligomerization is probably required to induce biological responses. Interacts (via SAM domain) with ANKS1A (via SAM domain). Expressed in brain and testis.

It is found in the membrane. The catalysed reaction is L-tyrosyl-[protein] + ATP = O-phospho-L-tyrosyl-[protein] + ADP + H(+). In terms of biological role, receptor tyrosine kinase which binds promiscuously GPI-anchored ephrin-A family ligands residing on adjacent cells, leading to contact-dependent bidirectional signaling into neighboring cells. The signaling pathway downstream of the receptor is referred to as forward signaling while the signaling pathway downstream of the ephrin ligand is referred to as reverse signaling. The polypeptide is Ephrin type-A receptor 6 (EPHA6) (Homo sapiens (Human)).